The sequence spans 292 residues: NAD kinase (292 aa).

Catalysis depends on aspartate 73, which acts as the Proton acceptor. NAD(+) contacts are provided by residues 73 to 74 (DG), 147 to 148 (NE), histidine 158, arginine 175, aspartate 177, 188 to 193 (TAYSLS), and glutamine 247.

It belongs to the NAD kinase family. A divalent metal cation serves as cofactor.

The protein localises to the cytoplasm. It carries out the reaction NAD(+) + ATP = ADP + NADP(+) + H(+). In terms of biological role, involved in the regulation of the intracellular balance of NAD and NADP, and is a key enzyme in the biosynthesis of NADP. Catalyzes specifically the phosphorylation on 2'-hydroxyl of the adenosine moiety of NAD to yield NADP. This chain is NAD kinase, found in Klebsiella pneumoniae subsp. pneumoniae (strain ATCC 700721 / MGH 78578).